A 1384-amino-acid chain; its full sequence is Hepatocyte growth factor receptor (1384 aa).

The signal sequence occupies residues 1–24 (MKAPAVLAPGILVLLFTFVQKSNG). The Extracellular segment spans residues 25–933 (ECKEALVKSR…VIVQPDQNFT (909 aa)). A Sema domain is found at 27 to 516 (KEALVKSRMN…TGKKITKIPL (490 aa)). N45 carries N-linked (GlcNAc...) asparagine glycosylation. Intrachain disulfides connect C95-C101, C98-C160, C133-C141, and C173-C176. N106 carries an N-linked (GlcNAc...) asparagine glycan. N-linked (GlcNAc...) asparagine glycosylation is present at N149. 2 N-linked (GlcNAc...) asparagine glycosylation sites follow: N203 and N359. Cystine bridges form between C299–C364 and C386–C398. Residues N400 and N406 are each glycosylated (N-linked (GlcNAc...) asparagine). 4 disulfides stabilise this stretch: C521/C539, C527/C562, C530/C546, and C542/C552. IPT/TIG domains lie at 564 to 656 (PTIY…FSYV), 658 to 740 (PIIT…FIYR), and 743 to 837 (PIVY…LIYV). An O-linked (Man) threonine glycan is attached at T583. Residues N608 and N636 are each glycosylated (N-linked (GlcNAc...) asparagine). 2 O-linked (Man) threonine glycosylation sites follow: T677 and T762. Residues N786, N880, and N931 are each glycosylated (N-linked (GlcNAc...) asparagine). A helical transmembrane segment spans residues 934–956 (GLIVGVVSVSIILLLLLGLFLWL). Residues 957–1384 (KKRKQIKDLG…NVSGEDDDDT (428 aa)) are Cytoplasmic-facing. S967 is subject to Phosphoserine. T978 carries the post-translational modification Phosphothreonine. S991, S998, and S1001 each carry phosphoserine. Y1004 carries the post-translational modification Phosphotyrosine. The region spanning 1079-1346 (VHFNEVIGRG…RIAAIFSAFI (268 aa)) is the Protein kinase domain. ATP-binding positions include 1085–1093 (IGRGHFGCV) and K1111. D1205 (proton acceptor) is an active-site residue. An interaction with RANBP9 region spans residues 1213–1382 (LDEKFTVKVA…QENVSGEDDD (170 aa)). Y1231 carries the post-translational modification Phosphotyrosine. Y1235 and Y1236 each carry phosphotyrosine; by autocatalysis. At T1290 the chain carries Phosphothreonine. Positions 1321–1360 (WHPKAELRPSFSELVSRIAAIFSAFIGEHYVHVNATYVNV) are interaction with MUC20. Phosphotyrosine; by autocatalysis occurs at positions 1350 and 1357. A Phosphotyrosine modification is found at Y1366.

It belongs to the protein kinase superfamily. Tyr protein kinase family. As to quaternary structure, heterodimer made of an alpha chain (50 kDa) and a beta chain (145 kDa) which are disulfide linked. Binds PLXNB1. Interacts when phosphorylated with downstream effectors including STAT3, PIK3R1, SRC, PCLG1, GRB2 and GAB1. Interacts with SPSB1, SPSB2 and SPSB4. Interacts with INPP5D/SHIP1. When phosphorylated at Tyr-1357, interacts with INPPL1/SHIP2. Interacts with RANBP9 and RANBP10, as well as SPSB1, SPSB2, SPSB3 and SPSB4. SPSB1 binding occurs in the presence and in the absence of HGF, however HGF treatment has a positive effect on this interaction. Interacts with MUC20; prevents interaction with GRB2 and suppresses hepatocyte growth factor-induced cell proliferation. Interacts with GRB10. Interacts with PTPN1 and PTPN2. Interacts with HSP90AA1 and HSP90AB1; the interaction suppresses MET kinase activity. Interacts with tensin TNS3. Interacts (when phosphorylated) with tensin TNS4 (via SH2 domain); the interaction increases MET protein stability by inhibiting MET endocytosis and subsequent lysosomal degradation. Autophosphorylated in response to ligand binding on Tyr-1235 and Tyr-1236 in the kinase domain leading to further phosphorylation of Tyr-1350 and Tyr-1357 in the C-terminal multifunctional docking site. Dephosphorylated by PTPRJ at Tyr-1350 and Tyr-1366. Dephosphorylated by PTPN1 and PTPN2. Post-translationally, ubiquitinated. Ubiquitination by CBL regulates the receptor stability and activity through proteasomal degradation. In terms of processing, O-mannosylation of IPT/TIG domains by TMEM260 is required for protein maturation. O-mannosylated residues are composed of single mannose glycans that are not elongated or modified.

Its subcellular location is the membrane. The enzyme catalyses L-tyrosyl-[protein] + ATP = O-phospho-L-tyrosyl-[protein] + ADP + H(+). Its activity is regulated as follows. In its inactive state, the C-terminal tail interacts with the catalytic domain and inhibits the kinase activity. Upon ligand binding, the C-terminal tail is displaced and becomes phosphorylated, thus increasing the kinase activity. Its function is as follows. Receptor tyrosine kinase that transduces signals from the extracellular matrix into the cytoplasm by binding to hepatocyte growth factor/HGF ligand. Regulates many physiological processes including proliferation, scattering, morphogenesis and survival. Ligand binding at the cell surface induces autophosphorylation of MET on its intracellular domain that provides docking sites for downstream signaling molecules. Following activation by ligand, interacts with the PI3-kinase subunit PIK3R1, PLCG1, SRC, GRB2, STAT3 or the adapter GAB1. Recruitment of these downstream effectors by MET leads to the activation of several signaling cascades including the RAS-ERK, PI3 kinase-AKT, or PLCgamma-PKC. The RAS-ERK activation is associated with the morphogenetic effects while PI3K/AKT coordinates prosurvival effects. During embryonic development, MET signaling plays a role in gastrulation, development and migration of muscles and neuronal precursors, angiogenesis and kidney formation. In adults, participates in wound healing as well as organ regeneration and tissue remodeling. Also promotes differentiation and proliferation of hematopoietic cells. This Ovis aries (Sheep) protein is Hepatocyte growth factor receptor (MET).